The following is a 269-amino-acid chain: Phosphonoacetaldehyde hydrolase (269 aa).

Catalysis depends on Asp10, which acts as the Nucleophile. Residues Asp10 and Ala12 each contribute to the Mg(2+) site. The active-site Schiff-base intermediate with substrate is Lys52. Mg(2+) is bound at residue Asp186.

It belongs to the HAD-like hydrolase superfamily. PhnX family. In terms of assembly, homodimer. Requires Mg(2+) as cofactor.

The enzyme catalyses phosphonoacetaldehyde + H2O = acetaldehyde + phosphate + H(+). In terms of biological role, involved in phosphonate degradation. The polypeptide is Phosphonoacetaldehyde hydrolase (Klebsiella pneumoniae subsp. pneumoniae (strain ATCC 700721 / MGH 78578)).